The chain runs to 883 residues: DNA double-strand break repair Rad50 ATPase (883 aa).

ATP is bound by residues Arg-12, 32 to 38 (NGSGKSS), and Gln-134. The stretch at 218–420 (ELRGELGGLE…EIGSRRGELK (203 aa)) forms a coiled coil. A Zinc-hook domain is found at 395 to 492 (IQKARERKEE…ELVEVEKTLK (98 aa)). Positions 440 and 443 each coordinate Zn(2+). Coiled coils occupy residues 452–585 (RKEL…KKLG) and 620–741 (EDLL…LLKE). 790–795 (FLSGGE) is a binding site for ATP.

It belongs to the SMC family. RAD50 subfamily. In terms of assembly, homodimer. Forms a heterotetramer composed of two Mre11 subunits and two Rad50 subunits. Requires Zn(2+) as cofactor.

Part of the Rad50/Mre11 complex, which is involved in the early steps of DNA double-strand break (DSB) repair. The complex may facilitate opening of the processed DNA ends to aid in the recruitment of HerA and NurA. Rad50 controls the balance between DNA end bridging and DNA resection via ATP-dependent structural rearrangements of the Rad50/Mre11 complex. In Thermococcus kodakarensis (strain ATCC BAA-918 / JCM 12380 / KOD1) (Pyrococcus kodakaraensis (strain KOD1)), this protein is DNA double-strand break repair Rad50 ATPase.